Here is a 239-residue protein sequence, read N- to C-terminus: Cysteine-rich venom protein (239 aa).

The N-terminal stretch at 1–19 (MIAFLVLPILAAVLQQSSG) is a signal peptide. An SCP domain is found at 39 to 166 (DLHNSLRRSV…EYKYFYVCQY (128 aa)). Disulfide bonds link C75–C153, C92–C167, C148–C164, C186–C193, C189–C198, C202–C234, C211–C228, and C219–C232. A ShKT domain is found at 202-234 (CTHEDKFTNCKDLVKQGCNNNYLKTNCPASCSC).

The protein belongs to the CRISP family. Expressed by the venom gland.

It localises to the secreted. Blocks contraction of smooth muscle elicited by high potassium-induced depolarization, but does not block caffeine-stimulated contraction. May target voltage-gated calcium channels in smooth muscle. The sequence is that of Cysteine-rich venom protein from Vipera berus (Common European adder).